The primary structure comprises 1609 residues: Probable outer membrane protein pmp21 (1609 aa).

Residues Met1–Glu30 form the signal peptide. The segment covering Phe132–Val145 has biased composition (polar residues). Disordered regions lie at residues Phe132–Glu183 and Thr640–Pro677. Composition is skewed to basic and acidic residues over residues Ile149–Ser175 and Asn651–Glu672. The 282-residue stretch at Glu1328–Phe1609 folds into the Autotransporter domain.

This sequence belongs to the PMP outer membrane protein family.

It is found in the secreted. Its subcellular location is the cell wall. The protein localises to the cell outer membrane. The chain is Probable outer membrane protein pmp21 (pmp21) from Chlamydia pneumoniae (Chlamydophila pneumoniae).